We begin with the raw amino-acid sequence, 1009 residues long: Type VII secretion system accessory factor EsaA (1009 aa).

The chain crosses the membrane as a helical span at residues 7 to 27 (IYALIVTLIIIIAIVSMIFFV). A compositionally biased stretch (basic and acidic residues) spans 680–697 (TFAEEPQEPKIDKGKNDE). Residues 680–707 (TFAEEPQEPKIDKGKNDEFNTMSSNLDK) are disordered. Helical transmembrane passes span 822–842 (ISPTLFVLLMYLLSMITAYIF), 869–889 (VITSGVIGTTGLVEGLIVGLI), 903–923 (KFILMVILTMMVFVLINTYLL), 928–948 (SIGMFLMIAALGLYFVAMNNL), and 979–999 (IGLVLVILTVLVIIGFVLNMF).

The protein belongs to the EsaA family. As to quaternary structure, homodimer. Interacts with EssB.

Its subcellular location is the cell membrane. Its function is as follows. Component of the type VII secretion system (Ess). Provides together with EssB and other components such as EssC and EssE a secretion plateform accross the cytoplasmic membrane in the host. The protein is Type VII secretion system accessory factor EsaA of Staphylococcus aureus (strain USA300).